The chain runs to 172 residues: Carotene biosynthesis-related protein CBR, chloroplastic (172 aa).

Residues 41–66 (AENNPSTPPPSSPSPPPPPPTPAAPT) form a disordered region. Pro residues predominate over residues 46–63 (STPPPSSPSPPPPPPTPA). A run of 2 helical transmembrane segments spans residues 111-131 (PTLI…PAFA) and 152-172 (FAMI…IALF).

It belongs to the ELIP/psbS family.

The protein localises to the plastid. The protein resides in the chloroplast membrane. Functionally, putative zeaxanthin binding protein. That forms photoprotective complexes within the light-harvesting antennae. The protein is Carotene biosynthesis-related protein CBR, chloroplastic (CBR) of Dunaliella salina (Green alga).